The sequence spans 1291 residues: Histone-lysine N-methyltransferase SETDB1 (1291 aa).

A coiled-coil region spans residues 18 to 64 (ESEEIAELQQAVVEELGISMEELRHFIDEELEKMDCVQQRKKQLAEL). A disordered region spans residues 108 to 147 (RDSSSEDESSRPTEIIEIPDEDDDVLSIDSGDAGSRTPKD). Phosphoserine occurs at positions 112 and 117. Thr120 is modified (phosphothreonine). Residues 124 to 133 (EIPDEDDDVL) show a composition bias toward acidic residues. Lys182 participates in a covalent cross-link: Glycyl lysine isopeptide (Lys-Gly) (interchain with G-Cter in SUMO2); alternate. A Glycyl lysine isopeptide (Lys-Gly) (interchain with G-Cter in ubiquitin); alternate cross-link involves residue Lys182. Tudor domains lie at 257 to 320 (KLYV…LKKT) and 347 to 403 (LLKS…SMKT). The interval 404-545 (SSASALEKKQ…APAPSALPAP (142 aa)) is disordered. Polar residues predominate over residues 433 to 444 (QYTQDLTGTGTQ). Residues 448–468 (VEPPQPTAPPAPPFPPAPPLS) are compositionally biased toward pro residues. A compositionally biased stretch (polar residues) spans 477 to 515 (ESQLAQSRKQVAKKSTSFRPGSVGSGHSSPTSPALSENV). Residues 528 to 539 (SPLGSTASAPAP) are compositionally biased toward low complexity. The MBD domain occupies 594–665 (YRGKNPLLVP…EMFCLDPYVL (72 aa)). The Pre-SET domain maps to 727–800 (VGCDCKDGCR…MCTNRLVQHG (74 aa)). The Zn(2+) site is built by Cys729, Cys731, Cys735, Cys741, Cys743, Cys781, Cys785, Cys787, and Cys792. In terms of domain architecture, SET spans 803–1266 (VRLQLFKTQN…AGTELTWDYN (464 aa)). S-adenosyl-L-methionine contacts are provided by residues 813-815 (KGW), Asp851, and Tyr853. A Glycyl lysine isopeptide (Lys-Gly) (interchain with G-Cter in ubiquitin) cross-link involves residue Lys867. Positions 868–1160 (EGYESDAPCS…MTGPMKRQVA (293 aa)) are disordered. Positions 896-907 (EDPEESNDDSSD) are enriched in acidic residues. Pro residues predominate over residues 951 to 963 (DLGPPHIPVPPSI). Phosphoserine is present on Ser1025. Positions 1031-1050 (IKDEGDIKQAKKEDTDDRNK) are enriched in basic and acidic residues. A Glycyl lysine isopeptide (Lys-Gly) (interchain with G-Cter in SUMO2); alternate cross-link involves residue Lys1032. Lys1032 participates in a covalent cross-link: Glycyl lysine isopeptide (Lys-Gly) (interchain with G-Cter in SUMO1); alternate. A Glycyl lysine isopeptide (Lys-Gly) (interchain with G-Cter in SUMO2) cross-link involves residue Lys1038. Positions 1052-1063 (SVVTESSRNYGY) are enriched in polar residues. Residue Ser1066 is modified to Phosphoserine. Residue Lys1069 forms a Glycyl lysine isopeptide (Lys-Gly) (interchain with G-Cter in SUMO2) linkage. The segment covering 1100–1115 (LTLSSSTESEGESGTS) has biased composition (low complexity). Residues 1116-1140 (RKPTAGQTSATAVDSDDIQTISSGS) show a composition bias toward polar residues. A Glycyl lysine isopeptide (Lys-Gly) (interchain with G-Cter in SUMO2) cross-link involves residue Lys1149. N6,N6,N6-trimethyllysine; alternate is present on residues Lys1170 and Lys1178. 2 positions are modified to N6,N6-dimethyllysine; alternate: Lys1170 and Lys1178. Residues Arg1220 and 1223 to 1224 (NH) each bind S-adenosyl-L-methionine. 4 residues coordinate Zn(2+): Cys1226, Cys1279, Cys1281, and Cys1286. The Post-SET domain occupies 1275–1291 (KELLCCCGAIECRGRLL).

Belongs to the class V-like SAM-binding methyltransferase superfamily. Histone-lysine methyltransferase family. Suvar3-9 subfamily. As to quaternary structure, part of a complex containing at least CDYL, REST, WIZ, SETDB1, EHMT1 and EHMT2. Forms a complex with ATRX, TRIM28 and ZNF274. Probably part of a corepressor complex containing ZNF304, TRIM28, SETDB1 and DNMT1. Interacts with TRIM28/TIF1B. Interacts with ATF7IP and ATF7IP2; the interaction with ATF7IP protects SETDB1 from proteasomal degradation and is required to stimulate histone methyltransferase activity and facilitate the conversion of dimethylated to trimethylated H3 'Lys-9'. Interacts with CBX1 and CBX5. Interacts with DNMT3A and DNMT3B. Interacts with SUMO2. Interacts with MPHOSPH8. Interacts with ERG. Interacts with HDAC1, HDAC2, SIN3A and SIN3B. Interacts with ATRX. Interacts with RESF1. Interacts with ZNF638. Interacts with TASOR. Interacts with ZNF263; recruited to the SIX3 promoter along with other proteins involved in chromatin modification and transcriptional corepression where it contributes to transcriptional repression. Interacts with PHF13; the interaction probably enhances SETDB1 chromatin-associated levels and activity. Interacts with VRK1. Degraded by the proteasome, shielded by interaction with ATF7IP. In terms of processing, monoubiquitinated at Lys-867 by E2 enzymes of the UBE2E family. The conjugated-Ub is protected from deubiquitination by the SET domain. Monoubiquitination at Lys-867 is required for catalytic activity, H3K9 methylation and endogenous retrovirus silencing. In terms of tissue distribution, widely expressed. High expression in testis.

It is found in the nucleus. Its subcellular location is the cytoplasm. The protein resides in the chromosome. The catalysed reaction is N(6),N(6)-dimethyl-L-lysyl(9)-[histone H3] + S-adenosyl-L-methionine = N(6),N(6),N(6)-trimethyl-L-lysyl(9)-[histone H3] + S-adenosyl-L-homocysteine + H(+). In terms of biological role, histone methyltransferase that specifically trimethylates 'Lys-9' of histone H3. H3 'Lys-9' trimethylation represents a specific tag for epigenetic transcriptional repression by recruiting HP1 (CBX1, CBX3 and/or CBX5) proteins to methylated histones. Mainly functions in euchromatin regions, thereby playing a central role in the silencing of euchromatic genes. H3 'Lys-9' trimethylation is coordinated with DNA methylation. Required for HUSH-mediated heterochromatin formation and gene silencing. Forms a complex with MBD1 and ATF7IP that represses transcription and couples DNA methylation and histone 'Lys-9' trimethylation. Its activity is dependent on MBD1 and is heritably maintained through DNA replication by being recruited by CAF-1. SETDB1 is targeted to histone H3 by TRIM28/TIF1B, a factor recruited by KRAB zinc-finger proteins. Probably forms a corepressor complex required for activated KRAS-mediated promoter hypermethylation and transcriptional silencing of tumor suppressor genes (TSGs) or other tumor-related genes in colorectal cancer (CRC) cells. Required to maintain a transcriptionally repressive state of genes in undifferentiated embryonic stem cells (ESCs). In ESCs, in collaboration with TRIM28, is also required for H3K9me3 and silencing of endogenous and introduced retroviruses in a DNA-methylation independent-pathway. Associates at promoter regions of tumor suppressor genes (TSGs) leading to their gene silencing. The SETDB1-TRIM28-ZNF274 complex may play a role in recruiting ATRX to the 3'-exons of zinc-finger coding genes with atypical chromatin signatures to establish or maintain/protect H3K9me3 at these transcriptionally active regions. This chain is Histone-lysine N-methyltransferase SETDB1, found in Homo sapiens (Human).